A 378-amino-acid polypeptide reads, in one-letter code: Ribosomal RNA large subunit methyltransferase G (378 aa).

It belongs to the methyltransferase superfamily. RlmG family.

The protein localises to the cytoplasm. The catalysed reaction is guanosine(1835) in 23S rRNA + S-adenosyl-L-methionine = N(2)-methylguanosine(1835) in 23S rRNA + S-adenosyl-L-homocysteine + H(+). Functionally, specifically methylates the guanine in position 1835 (m2G1835) of 23S rRNA. The chain is Ribosomal RNA large subunit methyltransferase G from Shewanella baltica (strain OS155 / ATCC BAA-1091).